Consider the following 167-residue polypeptide: NADH-quinone oxidoreductase subunit B 2 (167 aa).

Cysteine 38, cysteine 39, cysteine 104, and cysteine 133 together coordinate [4Fe-4S] cluster.

The protein belongs to the complex I 20 kDa subunit family. NDH-1 is composed of 14 different subunits. Subunits NuoB, C, D, E, F, and G constitute the peripheral sector of the complex. [4Fe-4S] cluster is required as a cofactor.

Its subcellular location is the cell membrane. It catalyses the reaction a quinone + NADH + 5 H(+)(in) = a quinol + NAD(+) + 4 H(+)(out). NDH-1 shuttles electrons from NADH, via FMN and iron-sulfur (Fe-S) centers, to quinones in the respiratory chain. The immediate electron acceptor for the enzyme in this species is believed to be ubiquinone. Couples the redox reaction to proton translocation (for every two electrons transferred, four hydrogen ions are translocated across the cytoplasmic membrane), and thus conserves the redox energy in a proton gradient. This Roseiflexus sp. (strain RS-1) protein is NADH-quinone oxidoreductase subunit B 2.